The primary structure comprises 217 residues: TPA-induced transmembrane protein (217 aa).

The tract at residues 1–37 (MDLAQPSQPVDELELSVLERQPEENTPLNGADKVFPS) is disordered. The chain crosses the membrane as a helical span at residues 66–86 (LWMIITSIFLGVITVIIIGLC).

As to quaternary structure, interacts with LIPH. As to expression, detected predominantly in the skin, with strongest expression in the inner root sheath of the hair follicle.

It is found in the endoplasmic reticulum. It localises to the cell membrane. In terms of biological role, has a role in LIPH-mediated synthesis of 2-acyl lysophosphatidic acid (LPA). LPA is a bioactive lipid mediator involved in different biological processes, and necessary to promote hair formation and growth. The chain is TPA-induced transmembrane protein (TTMP) from Homo sapiens (Human).